A 289-amino-acid chain; its full sequence is Protease HtpX homolog (289 aa).

Helical transmembrane passes span 11–31 (AALF…IGAG) and 36–54 (APIW…YGYW). Residue histidine 138 participates in Zn(2+) binding. The active site involves glutamate 139. A Zn(2+)-binding site is contributed by histidine 142. The next 2 membrane-spanning stretches (helical) occupy residues 153–173 (VAAA…FFGG) and 182–202 (LAMI…QMAI). Glutamate 207 serves as a coordination point for Zn(2+).

It belongs to the peptidase M48B family. Zn(2+) is required as a cofactor.

It is found in the cell membrane. This Pseudarthrobacter chlorophenolicus (strain ATCC 700700 / DSM 12829 / CIP 107037 / JCM 12360 / KCTC 9906 / NCIMB 13794 / A6) (Arthrobacter chlorophenolicus) protein is Protease HtpX homolog.